The sequence spans 187 residues: Large ribosomal subunit protein uL6 (187 aa).

Belongs to the universal ribosomal protein uL6 family. Part of the 50S ribosomal subunit.

Its function is as follows. This protein binds to the 23S rRNA, and is important in its secondary structure. It is located near the subunit interface in the base of the L7/L12 stalk, and near the tRNA binding site of the peptidyltransferase center. This chain is Large ribosomal subunit protein uL6, found in Chloroflexus aggregans (strain MD-66 / DSM 9485).